A 401-amino-acid polypeptide reads, in one-letter code: Multidrug resistance protein MdtH (401 aa).

A run of 11 helical transmembrane segments spans residues 13-33 (YFLL…FPLI), 34-54 (SIRF…ALGL), 99-116 (PWIL…GTLF), 139-159 (LLMM…SWLL), 165-185 (FVCW…AWLL), 214-234 (VLTL…LPIV), 243-263 (AAVK…LYPL), 277-297 (LMAG…ITHL), 299-319 (TLFM…PARE), 340-360 (LGLA…YDTG), and 368-388 (LPWF…YWQF).

This sequence belongs to the major facilitator superfamily. DHA1 family. MdtH (TC 2.A.1.2.21) subfamily.

Its subcellular location is the cell inner membrane. The chain is Multidrug resistance protein MdtH from Yersinia pseudotuberculosis serotype O:1b (strain IP 31758).